Consider the following 519-residue polypeptide: MPFNGEKQCVGEDQPSDSDSSRFSESMASLSDYECSRQSFASDSSSKSSSPASTSPPRVVTFDEVMATARNLSNLTLAHEIAVNENFQLKQEALPEKSLAGRVKHIVHQAFWDVLDSELNADPPEFEHAIKLFEEIREILLSFLTPGGNRLRNQICEVLDTDLIRQQAEHSAVDIQGLANYVISTMGKLCAPVRDNDIRELKATGNIVEVLRQIFHVLDLMQMDMANFTIMSLRPHLQRQLVEYERTKFQEILEETPSALDQTTEWIKESVNEELFSLSESALTPGAENTSKPSLSPTLVLNNSYLKLLQWDYQKKELPETLMTDGARLQELTEKLNQLKIIACLSLITNNMVGAITGGLPELASRLTRISAVLLEGMNKETFNLKEVLNSIGIQTCVEVNKTLMERGLPTLNAEIQANLIGQFSSIEEEDNPIWSLIDKRIKLYMRRLLCLPSPQKCMPPMPGGLAVIQQELEALGSQYANIVNLNKQVYGPFYANILRKLLFNEEAMGKVDASPPTN.

The disordered stretch occupies residues 1–30; that stretch reads MPFNGEKQCVGEDQPSDSDSSRFSESMASL. The residue at position 16 (Ser-16) is a Phosphoserine. The span at 17–29 shows a compositional bias: low complexity; the sequence is DSDSSRFSESMAS.

Belongs to the TCP11 family. Interacts with FMNL2; this interaction promotes muscle-derived satellite cell (MDSC) migration and differentiation.

Its subcellular location is the cytoplasm. The protein localises to the cytoskeleton. Its function is as follows. Promotes the migration of muscle-derived satellite cells (MDSCs) during differentiation throught interaction with FMNL2 and therefore may participate in microfilament assembly. The chain is T-complex protein 11-like protein 2 from Homo sapiens (Human).